The following is a 591-amino-acid chain: Paxillin (591 aa).

Met1 carries the post-translational modification N-acetylmethionine. The LD motif 1 motif lies at 3–15; sequence DLDALLADLESTT. Positions 17–138 are disordered; it reads HISKRPVFLS…SSPTVMSTSL (122 aa). Tyr31 bears the Phosphotyrosine; by PTK6 mark. A compositionally biased stretch (pro residues) spans 45–54; sequence VPPPVPPPPS. Residues 69 to 101 show a composition bias toward polar residues; it reads WQPSGSRFIHQQPQSSSPVYGSSAKTSSVSNPQ. Phosphoserine occurs at positions 83 and 85. A Phosphotyrosine modification is found at Tyr88. Residue Ser106 is modified to Phosphoserine. Tyr118 carries the post-translational modification Phosphotyrosine; by PTK6. 3 positions are modified to phosphoserine: Ser119, Ser126, and Ser130. Residues 121 to 137 show a composition bias toward polar residues; that stretch reads PNKQKSAESSPTVMSTS. Thr132 bears the Phosphothreonine mark. Residues Ser137, Ser140, and Ser143 each carry the phosphoserine modification. The short motif at 144–156 is the LD motif 2 element; sequence ELDRLLLELNAVQ. The interval 156–213 is disordered; sequence QHNPPGFPADEANSGPPLPGALSPHYGVPETNSPLGGKAGPLTKEKPKRNGGRGLEDV. The residue at position 181 (Tyr181) is a Phosphotyrosine. Residues 216–228 carry the LD motif 3 motif; it reads SVESLLDELESSV. The residue at position 230 (Ser230) is a Phosphoserine. Residues 237–260 form a disordered region; that stretch reads VNQGEMSSPQRVTSTQQQTRISAS. Phosphoserine; by CDK5 is present on Ser244. Ser250, Ser258, Ser261, and Ser272 each carry phosphoserine. The short motif at 265-276 is the LD motif 4 element; the sequence is ELDELMASLSDF. The span at 289-300 shows a compositional bias: basic and acidic residues; that stretch reads RCWAADWPRDGG. The interval 289–335 is disordered; the sequence is RCWAADWPRDGGRSSPGGQDEGGFMAQGKTGSSSPPGGPPKPGSQLD. A phosphoserine mark is found at Ser303, Ser322, Ser332, and Ser340. The short motif at 333–345 is the LD motif 5 element; sequence QLDSMLGSLQSDL. LIM zinc-binding domains lie at 356-415, 416-473, 474-533, and 534-591; these read GVCG…LFSP, RCYY…DMFA, PKCG…RRGS, and LCSG…KLFC. Residue Ser533 is modified to Phosphoserine.

It belongs to the paxillin family. As to quaternary structure, binds to vinculin and to the SH3 domain of SRC. Interacts with GIT1, NUDT16L1/SDOS, PARVA, PARVB, SORBS1 and TGFB1I1. Component of cytoplasmic complexes, which also contain GIT1, ARHGEF6 and PAK1. Binds ASAP2. Interacts with RNF5 and PDCD10. Interacts with NEK3 and this interaction is prolactin-dependent. Interacts with PTK2/FAK1 and PTK2B/PYK2. Interacts with PTK6. Interacts with CD36. Interacts (via cytoplasmic domain) with CEACAM1; the interaction is phosphotyrosyl-dependent. Interacts with PXN; this complex stabilizes actin dynamics. Interacts with TRIM15. Interacts with PAK4; PAK4 acts as a scaffold to suppport PAXI phosphorylation at Ser-272. In terms of processing, phosphorylated by MAPK1/ERK2. Phosphorylated on tyrosine residues during integrin-mediated cell adhesion, embryonic development, fibroblast transformation and following stimulation of cells by mitogens. Phosphorylation at Ser-244 by CDK5 reduces its interaction with PTK2/FAK1 in matrix-cell focal adhesions (MCFA) during oligodendrocytes (OLs) differentiation. Phosphorylation at Tyr-31 and Tyr-118 by PTK6 promote the activation of RAC1 via CRK/CrKII, thereby promoting migration and invasion. Phosphorylation at Ser-250 by SLK is required for PXN redistribution and cell motility. Phosphorylation at Ser-272 promotes focal adhesion disassembly during cell migration.

It is found in the cytoplasm. It localises to the cytoskeleton. Its subcellular location is the cell junction. The protein localises to the focal adhesion. The protein resides in the cell cortex. Its function is as follows. Cytoskeletal protein involved in actin-membrane attachment at sites of cell adhesion to the extracellular matrix (focal adhesion). Recruits other proteins such as TRIM15 to focal adhesion. This chain is Paxillin (PXN), found in Pongo abelii (Sumatran orangutan).